A 134-amino-acid polypeptide reads, in one-letter code: Small ribosomal subunit protein uS11 (134 aa).

This sequence belongs to the universal ribosomal protein uS11 family. In terms of assembly, part of the 30S ribosomal subunit. Interacts with proteins S7 and S18. Binds to IF-3.

In terms of biological role, located on the platform of the 30S subunit, it bridges several disparate RNA helices of the 16S rRNA. Forms part of the Shine-Dalgarno cleft in the 70S ribosome. The sequence is that of Small ribosomal subunit protein uS11 from Janthinobacterium sp. (strain Marseille) (Minibacterium massiliensis).